The sequence spans 85 residues: MREKEGGVVNDDFHYEVTRNWGTLSTSGNGWSLELKSISWNGRPEKYDIRAWSPDKSKMGKGVTLTRAEIVALRDLLNSMSLDPY.

This is an uncharacterized protein from Treponema pallidum (strain Nichols).